The chain runs to 483 residues: MRSVTSLVSFSACLLASSVTAADTPLTVNGKKFYSQDIITRDVVVVGGGSSGCHIAVRLQDAGKSVVVVEKSARLGGHVATYTDPATRKTAEQGLVTFHNTTHVTDYLTRLDIPLAPISFSPSTNFDYDLRTGKPVNRTYNPTQEEFAAGFAGYSAQLAKYPQLNDGTFLPYPVPEDLTMPFGKFLEKYNLTGALMQMYNFNWGTGNFLTNPTVEQMRYWGANTVAAVTTGKFLVTARHNSSEIYTKVGNVLGATSSVLLNSEVTYTRRSEGKTGVQLIVKTPEGSKLLVAKKLVIAIPPKLDFVAPLDLSKTEKDLFGKYIDAGYYVGMVRNTGIPARTLITNSAQDTPYNLPVLPAVNIMNPTAIDGVWTVFSSSLQSKASFPWADDAVKADIIRSIKALQTANPDKFQQTEPEIIEWHSHAPYFLQVSSEEIKNGFYAKLYALQGLRNTHFTGAAWRVHDSSQIWKYTDTQVLPKLLAGL.

The signal sequence occupies residues 1–21 (MRSVTSLVSFSACLLASSVTA). N-linked (GlcNAc...) asparagine glycosylation is found at N100, N137, N190, and N240.

This sequence belongs to the beta-cyclopiazonate dehydrogenase family. FAD is required as a cofactor.

The protein operates within secondary metabolite biosynthesis; terpenoid biosynthesis. Functionally, FAD-dependent oxidoreductase; part of the gene cluster that mediates the biosynthesis of the sesterterpenes ophiobolins, fungal phytotoxins with potential anti-cancer activities. The first step of the pathway is performed by the sesterterpene synthase oblA that possesses both prenyl transferase and terpene cyclase activity, converting isopentenyl diphosphate and dimethylallyl diphosphate into geranylfarnesyl diphosphate (GFPP) and further converting GFPP into ophiobolin F, respectively. Other sesterterpenoids (C(25) terpenoids) are found as minor products of oblA. The cytochrome P450 monooxygenase oblB then catalyzes a four-step oxidative transformation of ophiobolin F to yield ophiobolin C. The FAD-dependent oxidoreductase oblC might be involved in a later oxidation step that produces ophiobolin A. The chain is FAD-dependent oxidoreductase oblC from Cochliobolus heterostrophus (strain C5 / ATCC 48332 / race O) (Southern corn leaf blight fungus).